Reading from the N-terminus, the 332-residue chain is MTASPVRHVPVLGREAVAMLAPRAGGVYVDATFGAGGYSRAILAVADTRVIGIDRDRSAIAGGFALVEESGGRLTLVEDRFSNLAAVCAAEGADVVDGIVMDVGVSSMQLDEADRGFSFRLDGPLDMRMSGHGPTAADVVARASETDLANIIYIFGEERRSRAVARAIVAARRDAPVATTRALADIVSKVVRAKPHEIHPATRTFQALRIFVNEELDELIAALAAAERVLRPGGRLAVVSFHSLEDRIVKNFFALRGKTGGGSRHRPEIERAAPSFAILTRRPVTAGQEEVSANPRARSAKLRAAERTAAPATADDGESPGWPSLANVMRGG.

S-adenosyl-L-methionine contacts are provided by residues 36 to 38 (GGY), Asp54, Phe81, Asp102, and Gln109. Residues 284–332 (VTAGQEEVSANPRARSAKLRAAERTAAPATADDGESPGWPSLANVMRGG) are disordered.

It belongs to the methyltransferase superfamily. RsmH family.

It localises to the cytoplasm. The catalysed reaction is cytidine(1402) in 16S rRNA + S-adenosyl-L-methionine = N(4)-methylcytidine(1402) in 16S rRNA + S-adenosyl-L-homocysteine + H(+). Specifically methylates the N4 position of cytidine in position 1402 (C1402) of 16S rRNA. The polypeptide is Ribosomal RNA small subunit methyltransferase H (Nitrobacter hamburgensis (strain DSM 10229 / NCIMB 13809 / X14)).